A 92-amino-acid polypeptide reads, in one-letter code: Small ribosomal subunit protein uS19c (92 aa).

The protein belongs to the universal ribosomal protein uS19 family.

The protein localises to the plastid. It is found in the chloroplast. Functionally, protein S19 forms a complex with S13 that binds strongly to the 16S ribosomal RNA. The polypeptide is Small ribosomal subunit protein uS19c (Illicium oligandrum (Star anise)).